Here is a 601-residue protein sequence, read N- to C-terminus: Glutathione-regulated potassium-efflux system protein KefB (601 aa).

Transmembrane regions (helical) follow at residues 4-24 (ADLL…VPLA), 29-49 (IGAV…GLGF), 55-75 (EILH…GLEL), 87-107 (IFGV…GLLM), 111-131 (FLWQ…TAMA), 152-172 (VLLF…LLAG), 177-197 (HFDW…LIGG), 207-227 (FIAA…LVLS), 230-250 (LFMD…GVLL), 262-282 (AIDP…GMSL), 284-304 (LGVL…LVVI), 324-344 (MQFA…FSTA), and 356-376 (ALLL…MKGI). Positions 400-519 (KPQVIVVGFG…AGVTQFSRET (120 aa)) constitute an RCK N-terminal domain.

The protein belongs to the monovalent cation:proton antiporter 2 (CPA2) transporter (TC 2.A.37) family. KefB subfamily. As to quaternary structure, interacts with the regulatory subunit KefG.

The protein localises to the cell inner membrane. Pore-forming subunit of a potassium efflux system that confers protection against electrophiles. Catalyzes K(+)/H(+) antiport. The chain is Glutathione-regulated potassium-efflux system protein KefB from Salmonella paratyphi C (strain RKS4594).